A 181-amino-acid polypeptide reads, in one-letter code: Ribosome maturation factor RimM (181 aa).

The region spanning 99–172 (EDEFYQVDLI…FLIVDPMAAG (74 aa)) is the PRC barrel domain.

Belongs to the RimM family. As to quaternary structure, binds ribosomal protein uS19.

It localises to the cytoplasm. In terms of biological role, an accessory protein needed during the final step in the assembly of 30S ribosomal subunit, possibly for assembly of the head region. Essential for efficient processing of 16S rRNA. May be needed both before and after RbfA during the maturation of 16S rRNA. It has affinity for free ribosomal 30S subunits but not for 70S ribosomes. In Bartonella tribocorum (strain CIP 105476 / IBS 506), this protein is Ribosome maturation factor RimM.